A 364-amino-acid polypeptide reads, in one-letter code: D-alanine--D-alanine ligase A (364 aa).

In terms of domain architecture, ATP-grasp spans 145 to 348 (KRLLRDAGLN…YTDLITRLIE (204 aa)). ATP is bound at residue 175–230 (ESKLGLPLFVKPANQGSSVGVSKVTSEEQYAIAVDLAFEFDHKVIVEQGIKGREIE). The Mg(2+) site is built by Asp-302, Glu-315, and Asn-317.

This sequence belongs to the D-alanine--D-alanine ligase family. Mg(2+) is required as a cofactor. Mn(2+) serves as cofactor.

The protein resides in the cytoplasm. The catalysed reaction is 2 D-alanine + ATP = D-alanyl-D-alanine + ADP + phosphate + H(+). It participates in cell wall biogenesis; peptidoglycan biosynthesis. In terms of biological role, cell wall formation. The polypeptide is D-alanine--D-alanine ligase A (ddlA) (Escherichia coli O157:H7).